The chain runs to 165 residues: Shikimate kinase (165 aa).

11–16 (GAGKTT) contributes to the ATP binding site. Threonine 15 serves as a coordination point for Mg(2+). Substrate contacts are provided by aspartate 33, arginine 57, and glycine 78. Position 116 (arginine 116) interacts with ATP. Substrate is bound at residue arginine 134.

The protein belongs to the shikimate kinase family. In terms of assembly, monomer. Requires Mg(2+) as cofactor.

Its subcellular location is the cytoplasm. It carries out the reaction shikimate + ATP = 3-phosphoshikimate + ADP + H(+). It functions in the pathway metabolic intermediate biosynthesis; chorismate biosynthesis; chorismate from D-erythrose 4-phosphate and phosphoenolpyruvate: step 5/7. Catalyzes the specific phosphorylation of the 3-hydroxyl group of shikimic acid using ATP as a cosubstrate. The chain is Shikimate kinase from Bacillus cereus (strain AH187).